The chain runs to 496 residues: Probable cytosol aminopeptidase (496 aa).

Positions 266 and 271 each coordinate Mn(2+). Residue Lys-278 is part of the active site. Mn(2+) is bound by residues Asp-289, Asp-348, and Glu-350. Arg-352 is an active-site residue.

It belongs to the peptidase M17 family. Mn(2+) serves as cofactor.

The protein localises to the cytoplasm. It carries out the reaction Release of an N-terminal amino acid, Xaa-|-Yaa-, in which Xaa is preferably Leu, but may be other amino acids including Pro although not Arg or Lys, and Yaa may be Pro. Amino acid amides and methyl esters are also readily hydrolyzed, but rates on arylamides are exceedingly low.. It catalyses the reaction Release of an N-terminal amino acid, preferentially leucine, but not glutamic or aspartic acids.. Its function is as follows. Presumably involved in the processing and regular turnover of intracellular proteins. Catalyzes the removal of unsubstituted N-terminal amino acids from various peptides. This Pseudomonas fluorescens (strain SBW25) protein is Probable cytosol aminopeptidase.